Consider the following 262-residue polypeptide: LOB domain-containing protein 18 (262 aa).

Residues 36-138 form the LOB domain; the sequence is GPCGACKFLR…AEVSYLQAHL (103 aa). The disordered stretch occupies residues 223-262; that stretch reads VGLGGENSHDLQALAHELLHRQGSPPPAATDHSPSRTMSR.

Belongs to the LOB domain-containing protein family. In terms of assembly, homodimer and heterodimer with LBD16. Interacts with GIP1. In terms of tissue distribution, expressed in roots, stems, leaves and flowers. Expressed in vascular tissues of hypocotyls, leaves, roots, developing floral organs and siliques.

It localises to the nucleus. Involved in the positive regulation of tracheary element (TE) differentiation. Involved in a positive feedback loop that maintains or promotes NAC030/VND7 expression that regulates TE differentiation-related genes. Functions in the initiation and emergence of lateral roots, in conjunction with LBD16, downstream of ARF7 and ARF19. Transcriptional activator that directly regulates EXPA14, a gene encoding a cell wall-loosening factor that promotes lateral root emergence. Activates EXPA14 by directly binding to a specific region of its promoter. Transcriptional activator that directly regulates EXPA17, a gene encoding a cell wall-loosening factor that promotes lateral root emergence. Acts downstream of the auxin influx carriers AUX1 and LAX1 in the regulation of lateral root initiation and development. The protein is LOB domain-containing protein 18 (LBD18) of Arabidopsis thaliana (Mouse-ear cress).